A 189-amino-acid chain; its full sequence is Elongation factor P (189 aa).

It belongs to the elongation factor P family.

It localises to the cytoplasm. It functions in the pathway protein biosynthesis; polypeptide chain elongation. Its function is as follows. Involved in peptide bond synthesis. Stimulates efficient translation and peptide-bond synthesis on native or reconstituted 70S ribosomes in vitro. Probably functions indirectly by altering the affinity of the ribosome for aminoacyl-tRNA, thus increasing their reactivity as acceptors for peptidyl transferase. This Onion yellows phytoplasma (strain OY-M) protein is Elongation factor P.